The following is a 220-amino-acid chain: Fructose-6-phosphate aldolase (220 aa).

The Schiff-base intermediate with substrate role is filled by K85.

The protein belongs to the transaldolase family. Type 3A subfamily. As to quaternary structure, homodecamer.

It localises to the cytoplasm. The enzyme catalyses beta-D-fructose 6-phosphate = dihydroxyacetone + D-glyceraldehyde 3-phosphate. Functionally, catalyzes the reversible formation of fructose 6-phosphate from dihydroxyacetone and D-glyceraldehyde 3-phosphate via an aldolization reaction. This is Fructose-6-phosphate aldolase from Salmonella typhi.